Consider the following 613-residue polypeptide: Chaperone protein DnaK (613 aa).

The tract at residues 579-613 (MYQSASSTTQTGSGNQNSSKQENDKTVDAEYKEKS) is disordered. Residues 581–597 (QSASSTTQTGSGNQNSS) show a composition bias toward low complexity. Basic and acidic residues predominate over residues 599-613 (QENDKTVDAEYKEKS).

It belongs to the heat shock protein 70 family.

Functionally, acts as a chaperone. The protein is Chaperone protein DnaK of Thermoplasma volcanium (strain ATCC 51530 / DSM 4299 / JCM 9571 / NBRC 15438 / GSS1).